Here is a 782-residue protein sequence, read N- to C-terminus: Endonuclease MutS2 (782 aa).

336–343 (GPNTGGKT) provides a ligand contact to ATP. The region spanning 707 to 782 (LDLRGYRYED…GFGVTVATLK (76 aa)) is the Smr domain.

This sequence belongs to the DNA mismatch repair MutS family. MutS2 subfamily. As to quaternary structure, homodimer. Binds to stalled ribosomes, contacting rRNA.

Functionally, endonuclease that is involved in the suppression of homologous recombination and thus may have a key role in the control of bacterial genetic diversity. Its function is as follows. Acts as a ribosome collision sensor, splitting the ribosome into its 2 subunits. Detects stalled/collided 70S ribosomes which it binds and splits by an ATP-hydrolysis driven conformational change. Acts upstream of the ribosome quality control system (RQC), a ribosome-associated complex that mediates the extraction of incompletely synthesized nascent chains from stalled ribosomes and their subsequent degradation. Probably generates substrates for RQC. This chain is Endonuclease MutS2, found in Staphylococcus aureus (strain JH1).